A 473-amino-acid chain; its full sequence is Photosystem II CP43 reaction center protein (473 aa).

Residues 1-14 (MKILYSLRRFYHVE) constitute a propeptide that is removed on maturation. At Thr15 the chain carries N-acetylthreonine. Thr15 carries the phosphothreonine modification. The next 5 helical transmembrane spans lie at 69-93 (LFEV…PHLA), 134-155 (LLGP…KDRN), 178-200 (KALY…RKIT), 255-275 (KPFA…LSYS), and 291-312 (WFNN…ASQA). [CaMn4O5] cluster is bound at residue Glu367. The chain crosses the membrane as a helical span at residues 447–471 (RARAAAAGFEKGIDRDLEPVLYMNP).

This sequence belongs to the PsbB/PsbC family. PsbC subfamily. In terms of assembly, PSII is composed of 1 copy each of membrane proteins PsbA, PsbB, PsbC, PsbD, PsbE, PsbF, PsbH, PsbI, PsbJ, PsbK, PsbL, PsbM, PsbT, PsbX, PsbY, PsbZ, Psb30/Ycf12, at least 3 peripheral proteins of the oxygen-evolving complex and a large number of cofactors. It forms dimeric complexes. It depends on Binds multiple chlorophylls and provides some of the ligands for the Ca-4Mn-5O cluster of the oxygen-evolving complex. It may also provide a ligand for a Cl- that is required for oxygen evolution. PSII binds additional chlorophylls, carotenoids and specific lipids. as a cofactor.

Its subcellular location is the plastid. The protein localises to the chloroplast thylakoid membrane. Its function is as follows. One of the components of the core complex of photosystem II (PSII). It binds chlorophyll and helps catalyze the primary light-induced photochemical processes of PSII. PSII is a light-driven water:plastoquinone oxidoreductase, using light energy to abstract electrons from H(2)O, generating O(2) and a proton gradient subsequently used for ATP formation. In Brachypodium distachyon (Purple false brome), this protein is Photosystem II CP43 reaction center protein.